The following is a 263-amino-acid chain: Heat-labile enterotoxin IIB, A chain (263 aa).

Positions 1–20 are cleaved as a signal peptide; it reads MAKVISFFISLFLISFPLYA. 26-39 provides a ligand contact to NAD(+); that stretch reads ADSRTPDEVRRSGG. Glu-130 is a catalytic residue. An intrachain disulfide couples Cys-205 to Cys-217.

Belongs to the enterotoxin A family. As to quaternary structure, heterohexamer of one A chain and of five B chains.

Its function is as follows. The biological activity of the toxin is produced by the A chain, which activates intracellular adenyl cyclase. This Escherichia coli protein is Heat-labile enterotoxin IIB, A chain.